The chain runs to 209 residues: 2-phospho-L-lactate guanylyltransferase (209 aa).

The protein belongs to the CofC family. Homodimer.

It carries out the reaction (2S)-2-phospholactate + GTP + H(+) = (2S)-lactyl-2-diphospho-5'-guanosine + diphosphate. The protein operates within cofactor biosynthesis; coenzyme F420 biosynthesis. Its function is as follows. Guanylyltransferase that catalyzes the activation of (2S)-2-phospholactate (2-PL) as (2S)-lactyl-2-diphospho-5'-guanosine, via the condensation of 2-PL with GTP. It is involved in the biosynthesis of coenzyme F420, a hydride carrier cofactor. The sequence is that of 2-phospho-L-lactate guanylyltransferase from Halobacterium salinarum (strain ATCC 29341 / DSM 671 / R1).